A 71-amino-acid polypeptide reads, in one-letter code: Protein SlyX homolog (71 aa).

Positions 49–71 (KIKESQSSSSMMSNEPEPPPPHY) are disordered.

This sequence belongs to the SlyX family.

The sequence is that of Protein SlyX homolog from Pseudoalteromonas translucida (strain TAC 125).